Here is a 257-residue protein sequence, read N- to C-terminus: Urease accessory protein UreD 3 (257 aa).

The segment at 1-22 is disordered; sequence MSVRATARLRAEPDGRDGTALP.

Belongs to the UreD family. In terms of assembly, ureD, UreF and UreG form a complex that acts as a GTP-hydrolysis-dependent molecular chaperone, activating the urease apoprotein by helping to assemble the nickel containing metallocenter of UreC. The UreE protein probably delivers the nickel.

The protein resides in the cytoplasm. Functionally, required for maturation of urease via the functional incorporation of the urease nickel metallocenter. This Streptomyces griseus subsp. griseus (strain JCM 4626 / CBS 651.72 / NBRC 13350 / KCC S-0626 / ISP 5235) protein is Urease accessory protein UreD 3.